The primary structure comprises 436 residues: [Pyruvate dehydrogenase (acetyl-transferring)] kinase isozyme 1, mitochondrial (436 aa).

Residues 1–28 (MRLARLLRGAALAGPGPGLRAAGFSRSF) constitute a mitochondrion transit peptide. Y136 is subject to Phosphotyrosine; by FGFR1. One can recognise a Histidine kinase domain in the interval 163–393 (YKESFGVDPV…DAVIYIKALS (231 aa)). Phosphotyrosine; by FGFR1, ABL1, FLT3 and JAK2 is present on Y243. A Phosphotyrosine; by FGFR1 modification is found at Y244. ATP-binding positions include 279–286 (ELFKNAMR), D318, 337–338 (ST), and 354–359 (GFGYGL). T338 bears the Phosphothreonine mark. K405 is modified (N6-succinyllysine).

The protein belongs to the PDK/BCKDK protein kinase family. Homodimer, and heterodimer with PDK2. Interacts with the pyruvate dehydrogenase complex subunit DLAT, and is part of the multimeric pyruvate dehydrogenase complex that contains multiple copies of pyruvate dehydrogenase (E1), dihydrolipoamide acetyltransferase (DLAT, E2) and lipoamide dehydrogenase (DLD, E3). Interacts with phosphoglycerate kinase PGK1; the interaction is direct, occurs under hypoxic conditions and leads to PDK1-mediated inhibition of pyruvate dehydrogenase complex activity. In terms of processing, phosphorylated by constitutively activated ABL1, FGFR1, FLT3 and JAK2 (in vitro), and this may also occur in cancer cells that express constitutively activated ABL1, FGFR1, FLT3 and JAK2. Phosphorylation at Tyr-243 and Tyr-244 strongly increases kinase activity, while phosphorylation at Tyr-136 has a lesser effect. Phosphorylated under hypoxic conditions at Thr-338 by phosphoglycerate kinase PGK1 which has an activating effect. In terms of tissue distribution, expressed predominantly in the heart. Detected at lower levels in liver, skeletal muscle and pancreas.

Its subcellular location is the mitochondrion matrix. It carries out the reaction L-seryl-[pyruvate dehydrogenase E1 alpha subunit] + ATP = O-phospho-L-seryl-[pyruvate dehydrogenase E1 alpha subunit] + ADP + H(+). With respect to regulation, activity is enhanced by binding to the pyruvate dehydrogenase subunit DLAT. Inhibited by AZD7545; this compound interferes with DLAT binding and thereby inhibits kinase activity. Inhibited by dichloroacetate and radicicol. Activated under hypoxic conditions by phosphoglycerate kinase PGK1-mediated phosphorylation at Thr-338. Its function is as follows. Kinase that plays a key role in regulation of glucose and fatty acid metabolism and homeostasis via phosphorylation of the pyruvate dehydrogenase subunits PDHA1 and PDHA2. This inhibits pyruvate dehydrogenase activity, and thereby regulates metabolite flux through the tricarboxylic acid cycle, down-regulates aerobic respiration and inhibits the formation of acetyl-coenzyme A from pyruvate. Plays an important role in cellular responses to hypoxia and is important for cell proliferation under hypoxia. In Homo sapiens (Human), this protein is [Pyruvate dehydrogenase (acetyl-transferring)] kinase isozyme 1, mitochondrial (PDK1).